Reading from the N-terminus, the 77-residue chain is MSNIEERVKKITVEQLGVSEAEVKIDSSFVDDLGADSLDTVELVMALEEEFDTEIPDEEAEKITTVQAAIDYVTANQ.

Positions 2–77 (SNIEERVKKI…AAIDYVTANQ (76 aa)) constitute a Carrier domain. Ser-37 carries the post-translational modification O-(pantetheine 4'-phosphoryl)serine.

Belongs to the acyl carrier protein (ACP) family. Post-translationally, 4'-phosphopantetheine is transferred from CoA to a specific serine of apo-ACP by AcpS. This modification is essential for activity because fatty acids are bound in thioester linkage to the sulfhydryl of the prosthetic group.

The protein localises to the cytoplasm. Its pathway is lipid metabolism; fatty acid biosynthesis. Its function is as follows. Carrier of the growing fatty acid chain in fatty acid biosynthesis. The chain is Acyl carrier protein from Colwellia psychrerythraea (strain 34H / ATCC BAA-681) (Vibrio psychroerythus).